The primary structure comprises 206 residues: High frequency lysogenization protein HflD homolog (206 aa).

Belongs to the HflD family.

It localises to the cytoplasm. It is found in the cell inner membrane. The protein is High frequency lysogenization protein HflD homolog of Pseudomonas aeruginosa (strain LESB58).